A 251-amino-acid polypeptide reads, in one-letter code: CDP-diacylglycerol pyrophosphatase (251 aa).

A helical transmembrane segment spans residues 4–24; sequence AGLLFLVMIVIAVVAAGIGYW.

It belongs to the Cdh family.

It is found in the cell inner membrane. It catalyses the reaction a CDP-1,2-diacyl-sn-glycerol + H2O = a 1,2-diacyl-sn-glycero-3-phosphate + CMP + 2 H(+). It functions in the pathway phospholipid metabolism; CDP-diacylglycerol degradation; phosphatidate from CDP-diacylglycerol: step 1/1. The polypeptide is CDP-diacylglycerol pyrophosphatase (Escherichia coli O127:H6 (strain E2348/69 / EPEC)).